Here is a 634-residue protein sequence, read N- to C-terminus: Protein IcfG (634 aa).

The HAMP domain occupies H306 to A361. One can recognise a PPM-type phosphatase domain in the interval P385–R633.

Involved in cross-regulation of inorganic carbon and glucose metabolisms. This Synechocystis sp. (strain ATCC 27184 / PCC 6803 / Kazusa) protein is Protein IcfG (icfG).